The following is a 180-amino-acid chain: Shikimate kinase (180 aa).

G14–C19 contributes to the ATP binding site. T18 contacts Mg(2+). The substrate site is built by D36, R60, and G82. R120 is an ATP binding site. R139 is a binding site for substrate.

It belongs to the shikimate kinase family. Monomer. The cofactor is Mg(2+).

It localises to the cytoplasm. The enzyme catalyses shikimate + ATP = 3-phosphoshikimate + ADP + H(+). It functions in the pathway metabolic intermediate biosynthesis; chorismate biosynthesis; chorismate from D-erythrose 4-phosphate and phosphoenolpyruvate: step 5/7. Functionally, catalyzes the specific phosphorylation of the 3-hydroxyl group of shikimic acid using ATP as a cosubstrate. This Stenotrophomonas maltophilia (strain R551-3) protein is Shikimate kinase.